Reading from the N-terminus, the 597-residue chain is Elongation factor 4 (597 aa).

Residues 2 to 184 (DHIRNFSIIA…ALIAKVPPPK (183 aa)) enclose the tr-type G domain. GTP contacts are provided by residues 14–19 (DHGKST) and 131–134 (NKID).

The protein belongs to the TRAFAC class translation factor GTPase superfamily. Classic translation factor GTPase family. LepA subfamily.

The protein resides in the cell inner membrane. The enzyme catalyses GTP + H2O = GDP + phosphate + H(+). In terms of biological role, required for accurate and efficient protein synthesis under certain stress conditions. May act as a fidelity factor of the translation reaction, by catalyzing a one-codon backward translocation of tRNAs on improperly translocated ribosomes. Back-translocation proceeds from a post-translocation (POST) complex to a pre-translocation (PRE) complex, thus giving elongation factor G a second chance to translocate the tRNAs correctly. Binds to ribosomes in a GTP-dependent manner. The polypeptide is Elongation factor 4 (Burkholderia vietnamiensis (strain G4 / LMG 22486) (Burkholderia cepacia (strain R1808))).